Consider the following 188-residue polypeptide: Putative protein SSX6 (188 aa).

Disordered stretches follow at residues 1–22 (MNGD…EKRS) and 74–188 (KRAT…EDDK). Positions 20–83 (KRSKAFDDIA…KRATDSQRND (64 aa)) constitute a KRAB-related domain. Basic and acidic residues-rich tracts occupy residues 75-96 (RATD…EVER) and 112-122 (MPEKPAEEGSD). A Phosphoserine modification is found at serine 123. The span at 147–156 (SSEKIHERSG) shows a compositional bias: basic and acidic residues. The span at 157–170 (PKRGKHAWTHRLRE) shows a compositional bias: basic residues. The span at 179 to 188 (EISDPEEDDK) shows a compositional bias: acidic residues.

This sequence belongs to the SSX family. In terms of tissue distribution, not detected in any normal tissues. Expressed in a melanoma cell line.

In terms of biological role, could act as a modulator of transcription. This chain is Putative protein SSX6, found in Homo sapiens (Human).